The chain runs to 68 residues: uncharacterized protein (68 aa).

Positions 1 to 20 are disordered; the sequence is MYKQKKKNHPFQCKKKKKKK. Residues 27-44 traverse the membrane as a helical segment; it reads IKLLFNYFLFFNFIITTF.

The protein localises to the membrane. This is an uncharacterized protein from Dictyostelium discoideum (Social amoeba).